We begin with the raw amino-acid sequence, 82 residues long: Large ribosomal subunit protein uL23 (82 aa).

The protein belongs to the universal ribosomal protein uL23 family. Part of the 50S ribosomal subunit. Contacts protein L29.

Functionally, binds to 23S rRNA. One of the proteins that surrounds the polypeptide exit tunnel on the outside of the ribosome. The chain is Large ribosomal subunit protein uL23 from Sulfolobus acidocaldarius (strain ATCC 33909 / DSM 639 / JCM 8929 / NBRC 15157 / NCIMB 11770).